The chain runs to 201 residues: PLASMODESMATA CALLOSE-BINDING PROTEIN 1 (201 aa).

A signal peptide spans 1 to 19 (MAALVLSLLLLSLAGHSSA). Cys22 and Cys84 form a disulfide bridge. Low complexity predominate over residues 107–141 (SASGSSGSTTVTPGTTNPKGSPTTTTLPGSGTNSP). A disordered region spans residues 107–164 (SASGSSGSTTVTPGTTNPKGSPTTTTLPGSGTNSPYSGNPTNGVFGGNSTGGTTGTGI). Residues 150 to 161 (VFGGNSTGGTTG) are compositionally biased toward gly residues. Asn154 carries an N-linked (GlcNAc...) asparagine glycan. Ser172 carries the GPI-anchor amidated serine lipid modification. The propeptide at 173–201 (SAFALKNSSKLFICLLLIASSGFCSFLML) is removed in mature form. A glycan (N-linked (GlcNAc...) asparagine) is linked at Asn179.

Post-translationally, contains two additional disulfide bonds. Expressed in the shoot apical region and in young leaves but also detected in the laminar and vasculature of mature leaves.

It is found in the cell membrane. Its subcellular location is the cell junction. The protein localises to the plasmodesma. In terms of biological role, able to bind (1-&gt;3)-beta-D-glucans (laminarin). Probably involved in cell-to-cell trafficking regulation. This is PLASMODESMATA CALLOSE-BINDING PROTEIN 1 (PDCB1) from Arabidopsis thaliana (Mouse-ear cress).